A 286-amino-acid polypeptide reads, in one-letter code: uncharacterized protein (286 aa).

The 243-residue stretch at 26–268 (PLIILCHGFC…DACHYDIYEG (243 aa)) folds into the AB hydrolase-1 domain.

It to E.coli YcjY.

This is an uncharacterized protein from Escherichia coli.